Consider the following 335-residue polypeptide: Phosphatidate cytidylyltransferase, mitochondrial (335 aa).

Belongs to the TAM41 family. Requires Mg(2+) as cofactor.

Its subcellular location is the mitochondrion inner membrane. It carries out the reaction a 1,2-diacyl-sn-glycero-3-phosphate + CTP + H(+) = a CDP-1,2-diacyl-sn-glycerol + diphosphate. It functions in the pathway phospholipid metabolism; CDP-diacylglycerol biosynthesis; CDP-diacylglycerol from sn-glycerol 3-phosphate: step 3/3. Catalyzes the conversion of phosphatidic acid (PA) to CDP-diacylglycerol (CDP-DAG), an essential intermediate in the synthesis of phosphatidylglycerol, cardiolipin and phosphatidylinositol. The polypeptide is Phosphatidate cytidylyltransferase, mitochondrial (TAMM41) (Bos taurus (Bovine)).